Here is a 398-residue protein sequence, read N- to C-terminus: uncharacterized protein (398 aa).

6 helical membrane-spanning segments follow: residues 37–57, 92–112, 122–142, 186–206, 228–248, and 268–288; these read LVIL…FVQF, IFNA…FIFG, LLTL…SYIP, LFYG…ILII, IGGI…VIGT, and FGVA…NIVL.

The protein localises to the cell membrane. This is an uncharacterized protein from Mycoplasma genitalium (strain ATCC 33530 / DSM 19775 / NCTC 10195 / G37) (Mycoplasmoides genitalium).